Here is a 318-residue protein sequence, read N- to C-terminus: Peptidyl-prolyl cis-trans isomerase CPR4 (318 aa).

The first 20 residues, 1–20 (MWLKSLLLCLYSLVLCQVHA), serve as a signal peptide directing secretion. The region spanning 55–225 (YFDPVSKSMK…HELRFLYFVL (171 aa)) is the PPIase cyclophilin-type domain. N-linked (GlcNAc...) asparagine glycosylation occurs at asparagine 166. A helical membrane pass occupies residues 286 to 303 (ISRALMCLTVLGLCFIAY).

The protein localises to the membrane. It carries out the reaction [protein]-peptidylproline (omega=180) = [protein]-peptidylproline (omega=0). Its function is as follows. PPIases accelerate the folding of proteins. It catalyzes the cis-trans isomerization of proline imidic peptide bonds in oligopeptides. The protein is Peptidyl-prolyl cis-trans isomerase CPR4 (CPR4) of Saccharomyces cerevisiae (strain ATCC 204508 / S288c) (Baker's yeast).